The primary structure comprises 205 residues: Holliday junction branch migration complex subunit RuvA (205 aa).

The tract at residues 1-64 (MIGKLKGVVD…EDMIRLYGFR (64 aa)) is domain I. The interval 65–143 (SDAEREWFRL…AFAPVDPALV (79 aa)) is domain II. The segment at 144–152 (RLAGAVEAR) is flexible linker. Residues 153–205 (TAPQPVADAISALVNLGYPQAQASAAVAAALQSAGAEAEAKTLIRLGLRELAR) are domain III.

This sequence belongs to the RuvA family. In terms of assembly, homotetramer. Forms an RuvA(8)-RuvB(12)-Holliday junction (HJ) complex. HJ DNA is sandwiched between 2 RuvA tetramers; dsDNA enters through RuvA and exits via RuvB. An RuvB hexamer assembles on each DNA strand where it exits the tetramer. Each RuvB hexamer is contacted by two RuvA subunits (via domain III) on 2 adjacent RuvB subunits; this complex drives branch migration. In the full resolvosome a probable DNA-RuvA(4)-RuvB(12)-RuvC(2) complex forms which resolves the HJ.

Its subcellular location is the cytoplasm. Functionally, the RuvA-RuvB-RuvC complex processes Holliday junction (HJ) DNA during genetic recombination and DNA repair, while the RuvA-RuvB complex plays an important role in the rescue of blocked DNA replication forks via replication fork reversal (RFR). RuvA specifically binds to HJ cruciform DNA, conferring on it an open structure. The RuvB hexamer acts as an ATP-dependent pump, pulling dsDNA into and through the RuvAB complex. HJ branch migration allows RuvC to scan DNA until it finds its consensus sequence, where it cleaves and resolves the cruciform DNA. This chain is Holliday junction branch migration complex subunit RuvA, found in Methylobacterium sp. (strain 4-46).